Here is a 1050-residue protein sequence, read N- to C-terminus: Transcription intermediary factor 1-alpha (1050 aa).

Residue Lys-7 forms a Glycyl lysine isopeptide (Lys-Gly) (interchain with G-Cter in SUMO2) linkage. Over residues 15-30 (ASAAASGGPSAAPSGE) the composition is skewed to low complexity. The interval 15 to 44 (ASAAASGGPSAAPSGENEAESRQGPDSERG) is disordered. The span at 33–44 (AESRQGPDSERG) shows a compositional bias: basic and acidic residues. An RING-type zinc finger spans residues 56–82 (CAVCHQNIQSRAPKLLPCLHSFCQRCL). A Phosphothreonine modification is found at Thr-101. Residue Ser-110 is modified to Phosphoserine. B box-type zinc fingers lie at residues 158-211 (KSNQ…VSPE) and 218-259 (QRPV…YQFI). Positions 163, 166, 187, and 200 each coordinate Zn(2+). Residue Lys-205 forms a Glycyl lysine isopeptide (Lys-Gly) (interchain with G-Cter in SUMO2) linkage. Residues Cys-223, His-226, Cys-246, and His-251 each coordinate Zn(2+). Residue Lys-276 forms a Glycyl lysine isopeptide (Lys-Gly) (interchain with G-Cter in SUMO2) linkage. Positions 289–359 (NQIQNRIIEV…AGLSKQLEHV (71 aa)) form a coiled coil. The tract at residues 429–456 (ESQPQMPKQNPVVEQNSQPPSGLSSNQL) is disordered. Positions 431–456 (QPQMPKQNPVVEQNSQPPSGLSSNQL) are enriched in polar residues. Glycyl lysine isopeptide (Lys-Gly) (interchain with G-Cter in SUMO2) cross-links involve residues Lys-436 and Lys-458. Arg-469 is subject to Omega-N-methylarginine. Composition is skewed to low complexity over residues 476-490 (QVMAQRQQVQRRPAP) and 499-510 (QGPIQQPSISHQ). The interval 476-550 (QVMAQRQQVQ…PPNQNIPRQA (75 aa)) is disordered. Residues 526–535 (PNGPVLPPHP) show a composition bias toward pro residues. Lys-552 is covalently cross-linked (Glycyl lysine isopeptide (Lys-Gly) (interchain with G-Cter in SUMO2)). The tract at residues 571-594 (ISSGQGTPSTTNSTSSTPSSPTIT) is disordered. Over residues 577-594 (TPSTTNSTSSTPSSPTIT) the composition is skewed to low complexity. Lys-641 participates in a covalent cross-link: Glycyl lysine isopeptide (Lys-Gly) (interchain with G-Cter in SUMO2). Residues 643 to 712 (TNIDHGQPRP…PAGADSTHKV (70 aa)) form a disordered region. 3 positions are modified to phosphoserine: Ser-654, Ser-660, and Ser-667. Residues 654 to 666 (SNRTVQSPNSSVP) show a composition bias toward polar residues. The span at 685 to 707 (SPSASSVGSRGSSGSSSKPAGAD) shows a compositional bias: low complexity. Residues Lys-702 and Lys-711 each participate in a glycyl lysine isopeptide (Lys-Gly) (interchain with G-Cter in SUMO2) cross-link. A Glycyl lysine isopeptide (Lys-Gly) (interchain with G-Cter in SUMO1); alternate cross-link involves residue Lys-723. A Glycyl lysine isopeptide (Lys-Gly) (interchain with G-Cter in SUMO2); alternate cross-link involves residue Lys-723. Lys-741 is covalently cross-linked (Glycyl lysine isopeptide (Lys-Gly) (interchain with G-Cter in SUMO2)). Phosphoserine is present on Ser-744. The segment at 754 to 779 (NYPRSILTSLLLNSSQSSTSEETVLR) is nuclear receptor binding site (NRBS). The interval 766 to 824 (NSSQSSTSEETVLRSDAPDSTGDQPGLHQDNSSNGKSEWLDPSQKSPLHVGETRKEDDP) is disordered. Ser-768 is subject to Phosphoserine; by ATM. Lys-801 is covalently cross-linked (Glycyl lysine isopeptide (Lys-Gly) (interchain with G-Cter in SUMO2)). Ser-808 carries the phosphoserine modification. Lys-810 is covalently cross-linked (Glycyl lysine isopeptide (Lys-Gly) (interchain with G-Cter in SUMO2)). Residue Ser-811 is modified to Phosphoserine. Thr-818 bears the Phosphothreonine mark. The segment at 826 to 873 (EDWCAVCQNGGELLCCEKCPKVFHLSCHVPTLTNFPSGEWICTFCRDL) adopts a PHD-type zinc-finger fold. The segment at 834 to 840 (NGGELLC) is interaction with histone H3 that is not methylated at 'Lys-4' (H3K4me0). Lys-875 participates in a covalent cross-link: Glycyl lysine isopeptide (Lys-Gly) (interchain with G-Cter in SUMO2). The short motif at 891–907 (KKKTEGLVKLTPIDKRK) is the Nuclear localization signal element. In terms of domain architecture, Bromo spans 899 to 1004 (KLTPIDKRKC…NYFEELLKNL (106 aa)). A Glycyl lysine isopeptide (Lys-Gly) (interchain with G-Cter in SUMO2) cross-link involves residue Lys-949. The interaction with histone H3 that is acetylated at 'Lys-23' (H3K23ac) stretch occupies residues 979–980 (FN). Lys-992 is covalently cross-linked (Glycyl lysine isopeptide (Lys-Gly) (interchain with G-Cter in SUMO2)). The span at 1011–1026 (PKPEFRNESEDNKFSD) shows a compositional bias: basic and acidic residues. The segment at 1011-1036 (PKPEFRNESEDNKFSDDSDDDFVQPR) is disordered. Phosphoserine occurs at positions 1019, 1025, and 1028. Lys-1041 is covalently cross-linked (Glycyl lysine isopeptide (Lys-Gly) (interchain with G-Cter in SUMO2)). Phosphoserine is present on Ser-1042.

As to quaternary structure, interacts with CARM1, NCOA2/GRIP1, PML, KAT5/TIP60, BRD7, CBX1, CBX3 and CBX5. Part of a coactivator complex containing TRIM24, NCOA2 and CARM1. Interacts with NR3C2/MCR. Interacts with the ligand-binding domain of estrogen receptors (in vitro). Interaction with DNA-bound estrogen receptors requires the presence of estradiol. Interacts with AR and p53/TP53. Interacts (via bromo domain) with histone H3 (via N-terminus), provided that it is not methylated at 'Lys-4' (H3K4me0). Does not interact with histone H3 that is methylated at 'Lys-4' (H3K4me1, H3K4me2 or H3K4me3). Interacts (via bromo domain) with histone H3 (via N-terminus) that is acetylated at 'Lys-23' (H3K23ac). Has the highest affinity for histone H3 that is both unmodified at 'Lys-4' (H3K4me0) and acetylated at 'Lys-23' (H3K23ac). Has very low affinity for histone H3 that is methylated at 'Lys-9' (H3K9me), or acetylated at both 'Lys-9' (H3K9ac) and 'Lys-14' (H3K14ac), or acetylated at 'Lys-27' (H3K27ac) (in vitro). Interacts with TRIM16. Phosphorylated at Ser-768 by ATM kinase induces ubiquitination and degradation during DNA damage. In terms of processing, sumoylated. Post-translationally, undergoes ubiquitination-mediated degradation in response to DNA damage.

The protein localises to the nucleus. It is found in the cytoplasm. It localises to the mitochondrion. It catalyses the reaction S-ubiquitinyl-[E2 ubiquitin-conjugating enzyme]-L-cysteine + [acceptor protein]-L-lysine = [E2 ubiquitin-conjugating enzyme]-L-cysteine + N(6)-ubiquitinyl-[acceptor protein]-L-lysine.. It participates in protein modification; protein ubiquitination. In terms of biological role, transcriptional coactivator that interacts with numerous nuclear receptors and coactivators and modulates the transcription of target genes. Interacts with chromatin depending on histone H3 modifications, having the highest affinity for histone H3 that is both unmodified at 'Lys-4' (H3K4me0) and acetylated at 'Lys-23' (H3K23ac). Has E3 protein-ubiquitin ligase activity. During the DNA damage response, participates in an autoregulatory feedback loop with TP53. Early in response to DNA damage, ATM kinase phosphorylates TRIM24 leading to its ubiquitination and degradation. After sufficient DNA repair has occurred, TP53 activates TRIM24 transcription, ultimately leading to TRIM24-mediated TP53 ubiquitination and degradation. Plays a role in the regulation of cell proliferation and apoptosis, at least in part via its effects on p53/TP53 levels. Up-regulates ligand-dependent transcription activation by AR, GCR/NR3C1, thyroid hormone receptor (TR) and ESR1. Modulates transcription activation by retinoic acid (RA) receptors, including RARA. Plays a role in regulating retinoic acid-dependent proliferation of hepatocytes. Also participates in innate immunity by mediating the specific 'Lys-63'-linked ubiquitination of TRAF3 leading to activation of downstream signal transduction of the type I IFN pathway. Additionally, negatively regulates NLRP3/CASP1/IL-1beta-mediated pyroptosis and cell migration probably by ubiquitinating NLRP3. The chain is Transcription intermediary factor 1-alpha (TRIM24) from Homo sapiens (Human).